A 299-amino-acid polypeptide reads, in one-letter code: Nucleotide-binding protein glr4163 (299 aa).

18–25 (SPAGAGRT) contacts ATP.

This sequence belongs to the RapZ-like family.

Displays ATPase and GTPase activities. The chain is Nucleotide-binding protein glr4163 from Gloeobacter violaceus (strain ATCC 29082 / PCC 7421).